We begin with the raw amino-acid sequence, 511 residues long: GMP synthase [glutamine-hydrolyzing] (511 aa).

Residues 5-195 (PIVVLDFGSQ…AKHICGCEST (191 aa)) form the Glutamine amidotransferase type-1 domain. The active-site Nucleophile is the cysteine 82. Residues histidine 169 and glutamate 171 contribute to the active site. Residues 196–386 (WNMGSFAKEQ…LGLPKSMISR (191 aa)) form the GMPS ATP-PPase domain. 223-229 (SGGVDSS) contributes to the ATP binding site.

Homodimer.

The catalysed reaction is XMP + L-glutamine + ATP + H2O = GMP + L-glutamate + AMP + diphosphate + 2 H(+). Its pathway is purine metabolism; GMP biosynthesis; GMP from XMP (L-Gln route): step 1/1. Catalyzes the synthesis of GMP from XMP. The chain is GMP synthase [glutamine-hydrolyzing] from Aliarcobacter butzleri (strain RM4018) (Arcobacter butzleri).